The primary structure comprises 311 residues: Triacylglycerol lipase (311 aa).

Positions 1–26 (MKKKSLLPLGLAIGLASLAASPLIQA) are cleaved as a signal peptide. An AB hydrolase-1 domain is found at 35 to 280 (PIVLAHGMLG…DNYRMNHLDE (246 aa)). Residue Met42 coordinates substrate. Ser108 (nucleophile) is an active-site residue. His109 is a binding site for substrate. An intrachain disulfide couples Cys209 to Cys261. Asp235 lines the Ca(2+) pocket. Residues Asp255 and His277 each act as charge relay system in the active site. 3 residues coordinate Ca(2+): Asp279, Gln283, and Leu287.

This sequence belongs to the AB hydrolase superfamily. Pseudomonas lipase family. Monomer. Ca(2+) serves as cofactor.

It is found in the secreted. It carries out the reaction a triacylglycerol + H2O = a diacylglycerol + a fatty acid + H(+). In terms of biological role, catalyzes the hydrolysis of triacylglycerol. Also able to catalyze, in anhydrous organic solvents, intramolecular transesterification of omega-hydroxyfatty acid esters to form macrocyclic lactones. This biosynthesis is dependent on the chain length of the substrates, and the formation of monomer lactone is maximum with methyl 18-hydroxyoctadecanoate. With shorter substrates, monomer lactone decreases and the formation of diolide (dimer lactone) increases. The sequence is that of Triacylglycerol lipase from Pseudomonas sp. (strain 109).